A 458-amino-acid chain; its full sequence is Periphilin-1 (458 aa).

2 stretches are compositionally biased toward basic and acidic residues: residues 1 to 18 (MWSEGRYEYERIPRERAP) and 63 to 107 (EGRS…DGFR). 2 disordered regions span residues 1–51 (MWSE…SYNR) and 63–284 (EGRS…LFED). Positions 103 to 109 (RDGFRRK) match the Nuclear localization signal motif. A Glycyl lysine isopeptide (Lys-Gly) (interchain with G-Cter in SUMO2) cross-link involves residue Lys109. Ser110, Ser114, Ser133, and Ser140 each carry phosphoserine. The segment covering 116–142 (YARERSPYKRDNTFFRESPVGRKDSPH) has biased composition (basic and acidic residues). The span at 143–154 (SRSGSSVSSRSY) shows a compositional bias: low complexity. Lys160 participates in a covalent cross-link: Glycyl lysine isopeptide (Lys-Gly) (interchain with G-Cter in SUMO2). Phosphoserine is present on residues Ser161 and Ser167. Lys180 is covalently cross-linked (Glycyl lysine isopeptide (Lys-Gly) (interchain with G-Cter in SUMO2)). Residues 181–194 (RQNEGNPERDKERP) are compositionally biased toward basic and acidic residues. Phosphoserine is present on Ser197. Lys199 participates in a covalent cross-link: Glycyl lysine isopeptide (Lys-Gly) (interchain with G-Cter in SUMO2). A phosphoserine mark is found at Ser201 and Ser205. A compositionally biased stretch (low complexity) spans 205–215 (SPSSGSAVSSS). Residues 217–230 (VLDKPSRLTEKELA) show a composition bias toward basic and acidic residues. Lys227 participates in a covalent cross-link: Glycyl lysine isopeptide (Lys-Gly) (interchain with G-Cter in SUMO2). Lys235 and Lys240 each carry N6-acetyllysine; alternate. Glycyl lysine isopeptide (Lys-Gly) (interchain with G-Cter in SUMO2); alternate cross-links involve residues Lys235 and Lys240. Positions 237 to 246 (AAEKLEKSDE) are enriched in basic and acidic residues. Ser325 is subject to Phosphoserine. Lys328 participates in a covalent cross-link: Glycyl lysine isopeptide (Lys-Gly) (interchain with G-Cter in SUMO2). The interval 345-406 (GQTWQQVPPV…TQLRRTTGAP (62 aa)) is disordered. A compositionally biased stretch (pro residues) spans 377–386 (PQPPQAPQPL). Residues 388–398 (PRKKRVRRTTQ) show a composition bias toward basic residues. Lys453 is covalently cross-linked (Glycyl lysine isopeptide (Lys-Gly) (interchain with G-Cter in SUMO2)).

In terms of assembly, homodimer. Component of the HUSH complex; at least composed of TASOR, PPHLN1 and MPHOSPH8. Interacts with SIN3A and HDAC1. May interact with PPL. In terms of processing, substrate of transglutaminase (in vitro). As to expression, ubiquitous.

The protein localises to the nucleus. Its subcellular location is the cytoplasm. The protein resides in the chromosome. Functionally, component of the HUSH complex, a multiprotein complex that mediates epigenetic repression. The HUSH complex is recruited to genomic loci rich in H3K9me3 and is probably required to maintain transcriptional silencing by promoting recruitment of SETDB1, a histone methyltransferase that mediates further deposition of H3K9me3. In the HUSH complex, contributes to the maintenance of the complex at chromatin. Acts as a transcriptional corepressor and regulates the cell cycle, probably via the HUSH complex. The HUSH complex is also involved in the silencing of unintegrated retroviral DNA: some part of the retroviral DNA formed immediately after infection remains unintegrated in the host genome and is transcriptionally repressed. May be involved in epithelial differentiation by contributing to epidermal integrity and barrier formation. This Homo sapiens (Human) protein is Periphilin-1.